Consider the following 530-residue polypeptide: Probable serine/threonine-protein kinase fnkB (530 aa).

Residues 11–268 (WEIVETLKSN…SITLIDHPFL (258 aa)) enclose the Protein kinase domain. ATP is bound by residues 17–25 (LKSNVFKVN) and Lys-43. Asp-131 acts as the Proton acceptor in catalysis.

Belongs to the protein kinase superfamily. STE Ser/Thr protein kinase family. It depends on Mg(2+) as a cofactor.

It carries out the reaction L-seryl-[protein] + ATP = O-phospho-L-seryl-[protein] + ADP + H(+). The catalysed reaction is L-threonyl-[protein] + ATP = O-phospho-L-threonyl-[protein] + ADP + H(+). In Dictyostelium discoideum (Social amoeba), this protein is Probable serine/threonine-protein kinase fnkB.